A 512-amino-acid chain; its full sequence is Delta(14)-sterol reductase (512 aa).

8 helical membrane-spanning segments follow: residues 27-47 (IGAS…GFLC), 100-120 (AVLG…LLPA), 140-160 (ACLS…VRGP), 172-192 (YIQL…YVYL), 242-262 (SFME…AFAA), 278-298 (WTPL…VIIS), 324-344 (FGFM…SIQA), and 353-373 (ALGP…YYIF). Residues Lys380, Arg384, Leu407, Trp412, and 419 to 420 (NY) each bind NADP(+). The next 2 membrane-spanning stretches (helical) occupy residues 418-438 (INYL…LAAG) and 458-478 (MKGA…ILLI). NADP(+) contacts are provided by residues Asp484, 488-492 (CRRKY), and Tyr499.

The protein belongs to the ERG4/ERG24 family.

It is found in the membrane. It catalyses the reaction 4,4-dimethyl-5alpha-cholesta-8,24-dien-3beta-ol + NADP(+) = 4,4-dimethyl-5alpha-cholesta-8,14,24-trien-3beta-ol + NADPH + H(+). The protein operates within steroid biosynthesis; zymosterol biosynthesis; zymosterol from lanosterol: step 2/6. In terms of biological role, reduces the C14=C15 double bond of 4,4-dimethyl-cholesta-8,14,24-trienol to produce 4,4-dimethyl-cholesta-8,24-dienol. In Septoria lycopersici (Tomato leaf spot fungus), this protein is Delta(14)-sterol reductase (ERG3).